The sequence spans 261 residues: CD40 ligand (261 aa).

Residues 1–22 (MIETYSQPSPRSVAAGPPVSMK) lie on the Cytoplasmic side of the membrane. The chain crosses the membrane as a helical; Signal-anchor for type II membrane protein span at residues 23-43 (IFMYLLTVFLITQMIGSALFA). The Extracellular portion of the chain corresponds to 44 to 240 (AYLHRRLDKI…LQPGASVFVN (197 aa)). The THD domain maps to 122-261 (IAAHVISEAS…GFTSFGLLKL (140 aa)). A disulfide bond links Cys178 and Cys218. Asn240 is a glycosylation site (N-linked (GlcNAc...) asparagine).

Belongs to the tumor necrosis factor family. As to quaternary structure, homotrimer. Interacts with CD28. CD40 ligand, soluble form: Exists as either a monomer or a homotrimer. Forms a ternary complex between CD40 and integrins for CD40-CD40LG signaling. The soluble form derives from the membrane form by proteolytic processing.

The protein localises to the cell membrane. It is found in the cell surface. The protein resides in the secreted. Its function is as follows. Cytokine that acts as a ligand to CD40/TNFRSF5. Costimulates T-cell proliferation and cytokine production. Its cross-linking on T-cells generates a costimulatory signal which enhances the production of IL4 and IL10 in conjunction with the TCR/CD3 ligation and CD28 costimulation. Induces the activation of NF-kappa-B. Induces the activation of kinases MAPK8 and PAK2 in T-cells. Mediates B-cell proliferation in the absence of co-stimulus as well as IgE production in the presence of IL4. Involved in immunoglobulin class switching. Acts as a ligand for integrins, specifically ITGA5:ITGB1 and ITGAV:ITGB3; both integrins and the CD40 receptor are required for activation of CD40-CD40LG signaling, which have cell-type dependent effects, such as B-cell activation, NF-kappa-B signaling and anti-apoptotic signaling. The sequence is that of CD40 ligand (CD40LG) from Sus scrofa (Pig).